The following is a 282-amino-acid chain: Centromere protein P (282 aa).

Residues 1–80 (MEQKYEEDIQ…KDLRRQTEIN (80 aa)) are a coiled coil.

This sequence belongs to the CENP-P/CTF19 family.

The protein localises to the nucleus. It localises to the chromosome. The protein resides in the centromere. Functionally, probable component of a centromeric complex involved in assembly of kinetochore proteins, mitotic progression and chromosome segregation. This Danio rerio (Zebrafish) protein is Centromere protein P (cenpp).